A 783-amino-acid chain; its full sequence is BMP/retinoic acid-inducible neural-specific protein 2 (783 aa).

An N-terminal signal peptide occupies residues 1-33; it reads MRWPCSSWFRGLWPEAAPWAVLLALGVPGWVLA. Positions 85–281 constitute an MACPF domain; it reads RYRIYREFAR…FVAAALSYIT (197 aa). 6 N-linked (GlcNAc...) asparagine glycosylation sites follow: N185, N354, N473, N579, N626, and N658.

Belongs to the BRINP family. In terms of tissue distribution, weakly expressed in embryonic stem (ES) cells. Strongly expressed in ES-derived neural stem cells (NSCs).

It localises to the secreted. In terms of biological role, inhibits neuronal cell proliferation by negative regulation of the cell cycle transition. This Mus musculus (Mouse) protein is BMP/retinoic acid-inducible neural-specific protein 2 (Brinp2).